The chain runs to 481 residues: Glutamyl-tRNA(Gln) amidotransferase subunit A (481 aa).

Active-site charge relay system residues include Lys74 and Ser149. Catalysis depends on Ser173, which acts as the Acyl-ester intermediate.

The protein belongs to the amidase family. GatA subfamily. Heterotrimer of A, B and C subunits.

The enzyme catalyses L-glutamyl-tRNA(Gln) + L-glutamine + ATP + H2O = L-glutaminyl-tRNA(Gln) + L-glutamate + ADP + phosphate + H(+). Functionally, allows the formation of correctly charged Gln-tRNA(Gln) through the transamidation of misacylated Glu-tRNA(Gln) in organisms which lack glutaminyl-tRNA synthetase. The reaction takes place in the presence of glutamine and ATP through an activated gamma-phospho-Glu-tRNA(Gln). The protein is Glutamyl-tRNA(Gln) amidotransferase subunit A of Francisella tularensis subsp. tularensis (strain FSC 198).